A 418-amino-acid chain; its full sequence is Dwarfin sma-2 (418 aa).

The 127-residue stretch at 8-134 (KKITERLKWK…YKRVHATGVL (127 aa)) folds into the MH1 domain. Residues Cys62, Cys107, Cys119, and His124 each coordinate Zn(2+). Residues 222-418 (WATVSYYELN…PTPRPISSIS (197 aa)) enclose the MH2 domain.

The protein belongs to the dwarfin/SMAD family.

The protein resides in the cytoplasm. The protein localises to the nucleus. Involved in TGF-beta pathway. Plays a role in male tail tip morphogenesis. The polypeptide is Dwarfin sma-2 (Caenorhabditis elegans).